Reading from the N-terminus, the 220-residue chain is ATP-dependent Clp protease proteolytic subunit 1 (220 aa).

Ser-118 functions as the Nucleophile in the catalytic mechanism. His-143 is a catalytic residue.

It belongs to the peptidase S14 family. In terms of assembly, fourteen ClpP subunits assemble into 2 heptameric rings which stack back to back to give a disk-like structure with a central cavity, resembling the structure of eukaryotic proteasomes.

It is found in the cytoplasm. It catalyses the reaction Hydrolysis of proteins to small peptides in the presence of ATP and magnesium. alpha-casein is the usual test substrate. In the absence of ATP, only oligopeptides shorter than five residues are hydrolyzed (such as succinyl-Leu-Tyr-|-NHMec, and Leu-Tyr-Leu-|-Tyr-Trp, in which cleavage of the -Tyr-|-Leu- and -Tyr-|-Trp bonds also occurs).. Its function is as follows. Cleaves peptides in various proteins in a process that requires ATP hydrolysis. Has a chymotrypsin-like activity. Plays a major role in the degradation of misfolded proteins. This is ATP-dependent Clp protease proteolytic subunit 1 from Rhodococcus jostii (strain RHA1).